Reading from the N-terminus, the 61-residue chain is uncharacterized protein (61 aa).

This is an uncharacterized protein from Treponema pallidum (strain Nichols).